A 62-amino-acid polypeptide reads, in one-letter code: Large ribosomal subunit protein bL33 (62 aa).

This sequence belongs to the bacterial ribosomal protein bL33 family.

The protein is Large ribosomal subunit protein bL33 of Acaryochloris marina (strain MBIC 11017).